The sequence spans 548 residues: Probable nuclear hormone receptor HR3 (548 aa).

The interval 1 to 27 (MNNNQFHELFGSQWPPDQHGGHSSAST) is disordered. A DNA-binding region (nuclear receptor) is located at residues 101 to 176 (IIPCKVCGDK…LGMSRDAVKF (76 aa)). 2 NR C4-type zinc fingers span residues 104 to 124 (CKVC…CEGC) and 140 to 164 (CPRN…LQKC). The interval 198–228 (MRAQNDAAPDSVYDAQQQTPSSSDQFHGHYN) is disordered. A compositionally biased stretch (polar residues) spans 211 to 222 (DAQQQTPSSSDQ). An NR LBD domain is found at 295–539 (ISKVLVKSLA…PALYKELFSL (245 aa)).

This sequence belongs to the nuclear hormone receptor family. NR1 subfamily.

The protein resides in the nucleus. Its function is as follows. Putative receptor whose ligand is not yet known. This chain is Probable nuclear hormone receptor HR3 (HR3), found in Manduca sexta (Tobacco hawkmoth).